Consider the following 630-residue polypeptide: Plastin-3 (630 aa).

EF-hand domains lie at 12–47 and 52–87; these read DELD…ANMP and KVRE…VKSS. Asp25, Asn27, Asn29, Glu36, Asp65, Asn67, Asp69, Lys71, and Glu76 together coordinate Ca(2+). Actin-binding stretches follow at residues 109–382 and 383–627; these read TSEL…ALTK and PENQ…GRGM. 2 Calponin-homology (CH) domains span residues 123-239 and 267-378; these read EEEK…KIGL and LSPE…NKYP. Ser268, Ser293, Ser326, and Ser339 each carry phosphoserine. Thr391 bears the Phosphothreonine mark. Calponin-homology (CH) domains are found at residues 397–506 and 518–627; these read TREE…RRYT and KAND…GRGM.

As to quaternary structure, monomer.

The protein localises to the cytoplasm. In terms of biological role, actin-bundling protein. The chain is Plastin-3 (PLS3) from Bos taurus (Bovine).